The sequence spans 445 residues: Phosphoglucosamine mutase (445 aa).

The active-site Phosphoserine intermediate is the S105. Residues S105, D244, D246, and D248 each coordinate Mg(2+). S105 carries the phosphoserine modification.

This sequence belongs to the phosphohexose mutase family. Mg(2+) is required as a cofactor. Post-translationally, activated by phosphorylation.

It carries out the reaction alpha-D-glucosamine 1-phosphate = D-glucosamine 6-phosphate. Catalyzes the conversion of glucosamine-6-phosphate to glucosamine-1-phosphate. This Janthinobacterium sp. (strain Marseille) (Minibacterium massiliensis) protein is Phosphoglucosamine mutase.